Consider the following 189-residue polypeptide: dCTP deaminase (189 aa).

DCTP is bound by residues 112 to 117 (KSTYAR), 136 to 138 (TLE), glutamine 157, tyrosine 171, and glutamine 181. Residue glutamate 138 is the Proton donor/acceptor of the active site.

This sequence belongs to the dCTP deaminase family. In terms of assembly, homotrimer.

It catalyses the reaction dCTP + H2O + H(+) = dUTP + NH4(+). Its pathway is pyrimidine metabolism; dUMP biosynthesis; dUMP from dCTP (dUTP route): step 1/2. Its function is as follows. Catalyzes the deamination of dCTP to dUTP. The sequence is that of dCTP deaminase from Burkholderia thailandensis (strain ATCC 700388 / DSM 13276 / CCUG 48851 / CIP 106301 / E264).